The following is a 401-amino-acid chain: MVGPGLGINRVRRKGVYSTKKGSGDNLLLMKRQGKHDIHDRESDDLSGHDAFSPSKKRGKIDSITEDEIEVKKLSTVATFDKLSRSFPNSEVQAAKNAALRGKEKEEEKVVSIPLIQNLKNEDIESIKCRNNNLLDGKKLLLEAELSAVEDNQIFSSSFPEDKKLSLQSCLSSKEQIIKKLQVREEYMSKFKLPPMLFSDELLTEVEPFMPIVMDILEGKISSVYYFEAKNAFKNSQKAYLSVDEFRKLNLNKFTAGFYGLKRQLRVGEEIAKRYKRALTHNQPATLKWWGITDFCNYVLAPETLTSFCIYQLNLSNKSCSSKTPNKHPKQQLNEKEYYYDPELRMLAYDLLEDTVEYGIIVADSDPIEQWEAAIEEDRLRELKLDVHNYSSRRWRLDTHD.

Residue Ser23 is modified to Phosphoserine. Positions 35–48 (KHDIHDRESDDLSG) are enriched in basic and acidic residues. The segment at 35–59 (KHDIHDRESDDLSGHDAFSPSKKRG) is disordered.

Belongs to the RTC4 family.

It is found in the cytoplasm. It localises to the nucleus. May be involved in a process influencing telomere capping. This Saccharomyces cerevisiae (strain ATCC 204508 / S288c) (Baker's yeast) protein is Restriction of telomere capping protein 4 (RTC4).